The chain runs to 147 residues: Myosin-2 essential light chain (147 aa).

EF-hand domains are found at residues 7–42 (DQLA…LGQN), 80–115 (DTAD…LGEK), and 115–147 (KLTD…VMSG). Ser30 is modified (phosphoserine). Ca(2+) is bound by residues Asp93, Asp95, Ser97, Tyr99, and Glu104.

Myosin is a hexamer of 2 heavy chains and 4 light chains.

The protein is Myosin-2 essential light chain (Mlc-c) of Drosophila melanogaster (Fruit fly).